The primary structure comprises 260 residues: 3-oxoadipate CoA-transferase subunit B (260 aa).

Residue Glu51 is part of the active site.

It belongs to the 3-oxoacid CoA-transferase subunit B family. Heterotetramer composed of 2 A and 2 B subunits.

The catalysed reaction is 3-oxoadipate + succinyl-CoA = 3-oxoadipyl-CoA + succinate. The protein operates within aromatic compound metabolism; beta-ketoadipate pathway; acetyl-CoA and succinyl-CoA from 3-oxoadipate: step 1/2. In Pseudomonas knackmussii (strain DSM 6978 / CCUG 54928 / LMG 23759 / B13), this protein is 3-oxoadipate CoA-transferase subunit B (catJ).